Here is a 223-residue protein sequence, read N- to C-terminus: PKHD-type hydroxylase CPS_3426 (223 aa).

The Fe2OG dioxygenase domain occupies 77–175; it reads KSMMPFIISE…RKVALTWIES (99 aa). Residues histidine 96, aspartate 98, and histidine 156 each contribute to the Fe cation site. Arginine 166 lines the 2-oxoglutarate pocket.

Fe(2+) serves as cofactor. L-ascorbate is required as a cofactor.

The sequence is that of PKHD-type hydroxylase CPS_3426 from Colwellia psychrerythraea (strain 34H / ATCC BAA-681) (Vibrio psychroerythus).